The sequence spans 339 residues: MLELFFEYIFPLIIIALKVVAITIPLILCVAYLTYAERRVIGLMQLRRGPNVVGPFGLLQPIADAVKLLFKEPIIPTNADKILFILAPMITFILSLIGWAVIPFAKGVVLADINVGVLYILAISSLSVYGIIIAGWASNSKYAFLGAIRSSAQMISYEVSMGLVIITVLLTTGTLNLSEIIEAQRTIPWWIDLMLLPMGVVFFISVLAETNRLPFDLPEAESELVAGYNVEYSSMGFALFFLGEYANMILVSAMTTTFFLGGYLPPFNISWLDCIPGFFWFVFKVGFLLFCFLWIRATLPRYRYDQLMRLGWKVFLPLTLFWVVLVSSVLVYTDNLPSI.

Helical transmembrane passes span 9 to 29, 50 to 70, 82 to 102, 115 to 135, 161 to 181, 187 to 207, 235 to 255, 275 to 295, and 311 to 331; these read IFPL…LILC, PNVV…KLLF, ILFI…WAVI, VGVL…IIAG, MGLV…SEII, IPWW…ISVL, MGFA…SAMT, IPGF…FLWI, and GWKV…SVLV.

Belongs to the complex I subunit 1 family. NDH-1 is composed of 14 different subunits. Subunits NuoA, H, J, K, L, M, N constitute the membrane sector of the complex.

It localises to the cell inner membrane. It carries out the reaction a quinone + NADH + 5 H(+)(in) = a quinol + NAD(+) + 4 H(+)(out). NDH-1 shuttles electrons from NADH, via FMN and iron-sulfur (Fe-S) centers, to quinones in the respiratory chain. The immediate electron acceptor for the enzyme in this species is believed to be ubiquinone. Couples the redox reaction to proton translocation (for every two electrons transferred, four hydrogen ions are translocated across the cytoplasmic membrane), and thus conserves the redox energy in a proton gradient. This subunit may bind ubiquinone. The chain is NADH-quinone oxidoreductase subunit H from Rickettsia rickettsii (strain Iowa).